Here is a 198-residue protein sequence, read N- to C-terminus: Translation machinery-associated protein 22 (198 aa).

One can recognise an SUI1 domain in the interval 99-170 (VIIKREARTK…EVETYIHSLL (72 aa)).

It belongs to the DENR family. Interacts with the 40S ribosomal subunit.

It localises to the cytoplasm. The sequence is that of Translation machinery-associated protein 22 (TMA22) from Saccharomyces cerevisiae (strain YJM789) (Baker's yeast).